The primary structure comprises 456 residues: tRNA modification GTPase MnmE (456 aa).

Lys-29, Glu-87, and Arg-126 together coordinate (6S)-5-formyl-5,6,7,8-tetrahydrofolate. A TrmE-type G domain is found at 222–380 (GYKLAIIGRP…LLSLLASWLD (159 aa)). Residue Asn-232 participates in K(+) binding. GTP is bound by residues 232-237 (NVGKSS), 251-257 (SDIPGTT), and 276-279 (DTAG). Mg(2+) is bound at residue Ser-236. Residues Ser-251, Ile-253, and Thr-256 each coordinate K(+). Thr-257 provides a ligand contact to Mg(2+). (6S)-5-formyl-5,6,7,8-tetrahydrofolate is bound at residue Lys-456.

The protein belongs to the TRAFAC class TrmE-Era-EngA-EngB-Septin-like GTPase superfamily. TrmE GTPase family. Homodimer. Heterotetramer of two MnmE and two MnmG subunits. The cofactor is K(+).

It localises to the cytoplasm. Its function is as follows. Exhibits a very high intrinsic GTPase hydrolysis rate. Involved in the addition of a carboxymethylaminomethyl (cmnm) group at the wobble position (U34) of certain tRNAs, forming tRNA-cmnm(5)s(2)U34. This Wolinella succinogenes (strain ATCC 29543 / DSM 1740 / CCUG 13145 / JCM 31913 / LMG 7466 / NCTC 11488 / FDC 602W) (Vibrio succinogenes) protein is tRNA modification GTPase MnmE.